The sequence spans 585 residues: GRR1-like protein 1 (585 aa).

Residues 1–48 form the F-box domain; sequence MGLRFPPKVLEHILSFIDSNEDRNSVSLVCKSWFETERKTRKRVFVGN. K70 lines the 1D-myo-inositol hexakisphosphate pocket. The segment at 77 to 78 is interaction with auxin-responsive proteins; the sequence is DY. Residues 109–110 and R340 each bind 1D-myo-inositol hexakisphosphate; that span reads KR. Positions 343-348 are interaction with auxin-responsive proteins; sequence PSEPDL. 397-399 is a 1D-myo-inositol hexakisphosphate binding site; it reads CFR. The tract at residues 401–405 is interaction with auxin-responsive proteins; the sequence is CVIEP. A 1D-myo-inositol hexakisphosphate-binding site is contributed by R432. Residues 460–461 are interaction with auxin-responsive proteins; that stretch reads AF. 1D-myo-inositol hexakisphosphate-binding positions include 480-481 and R505; that span reads KK.

In terms of assembly, part of a SCF (SKP1-cullin-F-box) protein ligase complex. Interacts with CUL1, SKP1A/ASK1 and SKP1B/ASK2. Interacts with Aux/IAA proteins (IAA7 and IAA12) in an auxin-dependent manner. As to expression, ubiquitous.

It is found in the nucleus. The protein operates within protein modification; protein ubiquitination. Functionally, component of SCF(ASK-cullin-F-box) E3 ubiquitin ligase complexes, which may mediate the ubiquitination and subsequent proteasomal degradation of target proteins. Auxin receptor that mediates Aux/IAA proteins proteasomal degradation and auxin-regulated transcription. Involved in embryogenesis regulation by auxin. Confers sensitivity to the virulent bacterial pathogen P.syringae. Mediates glucose repression in yeast. The sequence is that of GRR1-like protein 1 (GRH1) from Arabidopsis thaliana (Mouse-ear cress).